The following is a 129-amino-acid chain: uncharacterized protein (129 aa).

Residues 86-96 show a composition bias toward acidic residues; it reads NDGFSSDDEPE. Residues 86 to 116 are disordered; sequence NDGFSSDDEPEEHVILTEDNQGEPSETPQAT. A compositionally biased stretch (polar residues) spans 103-116; it reads EDNQGEPSETPQAT.

The protein belongs to the asfivirus D129L family.

This is an uncharacterized protein from African swine fever virus (strain Badajoz 1971 Vero-adapted) (Ba71V).